The primary structure comprises 126 residues: Flagellar assembly factor FliW (126 aa).

This sequence belongs to the FliW family. Interacts with translational regulator CsrA and flagellin(s).

It localises to the cytoplasm. Acts as an anti-CsrA protein, binds CsrA and prevents it from repressing translation of its target genes, one of which is flagellin. Binds to flagellin and participates in the assembly of the flagellum. This chain is Flagellar assembly factor FliW, found in Sulfurimonas denitrificans (strain ATCC 33889 / DSM 1251) (Thiomicrospira denitrificans (strain ATCC 33889 / DSM 1251)).